The following is a 199-amino-acid chain: ATP-dependent Clp protease proteolytic subunit 2 (199 aa).

Ser-95 (nucleophile) is an active-site residue. Residue His-120 is part of the active site.

Belongs to the peptidase S14 family. In terms of assembly, fourteen ClpP subunits assemble into 2 heptameric rings which stack back to back to give a disk-like structure with a central cavity, resembling the structure of eukaryotic proteasomes.

The protein localises to the cytoplasm. It catalyses the reaction Hydrolysis of proteins to small peptides in the presence of ATP and magnesium. alpha-casein is the usual test substrate. In the absence of ATP, only oligopeptides shorter than five residues are hydrolyzed (such as succinyl-Leu-Tyr-|-NHMec, and Leu-Tyr-Leu-|-Tyr-Trp, in which cleavage of the -Tyr-|-Leu- and -Tyr-|-Trp bonds also occurs).. Cleaves peptides in various proteins in a process that requires ATP hydrolysis. Has a chymotrypsin-like activity. Plays a major role in the degradation of misfolded proteins. In Mycolicibacterium paratuberculosis (strain ATCC BAA-968 / K-10) (Mycobacterium paratuberculosis), this protein is ATP-dependent Clp protease proteolytic subunit 2.